The sequence spans 209 residues: Hydrogenase expression/formation protein HupM (209 aa).

Residues Glu21, Asp67, and His98 each coordinate Ni(2+).

It belongs to the peptidase A31 family.

Not known. Could be involved in the processing of hydrogenase. The sequence is that of Hydrogenase expression/formation protein HupM (hupM) from Azotobacter chroococcum mcd 1.